We begin with the raw amino-acid sequence, 213 residues long: MNKNFEYPEIASLEQPAKKLVVLLHGVGSDGHDLIGLVPYIKDDLPDCHFISPHGIEPYDMAPYGRQWFSLQDRSPDNISKLLVKNISKLDDIIKQKQEELNLTNKDTIIIGFSQGTMIGLYLTLIQKEPFYCTVGFSGALIPPAEINNKTTPICLIHGELDDVVSVNEMYNASHYLSKYHIPHSGHKLTRLSHSIDGRGIEIAVNFICHTVA.

Catalysis depends on charge relay system residues Ser-114, Asp-162, and His-194.

It belongs to the AB hydrolase superfamily. AB hydrolase 2 family.

This is an uncharacterized protein from Rickettsia bellii (strain RML369-C).